A 414-amino-acid chain; its full sequence is L-lysine 2,3-aminomutase (414 aa).

Residues 89–101 show a composition bias toward basic and acidic residues; the sequence is AASDQEDPLHEDG. Residues 89–108 are disordered; it reads AASDQEDPLHEDGDSPVPGL. In terms of domain architecture, Radical SAM core spans 110-321; sequence HRYPDRVLLL…EGLRGHTSGY (212 aa). Residues Cys124, Cys128, and Cys131 each contribute to the [4Fe-4S] cluster site. Position 267 (Cys267) interacts with Zn(2+). An N6-(pyridoxal phosphate)lysine modification is found at Lys336. The Zn(2+) site is built by Cys374, Cys376, and Cys379.

The protein belongs to the radical SAM superfamily. KamA family. In terms of assembly, homotetramer. It depends on [4Fe-4S] cluster as a cofactor. Pyridoxal 5'-phosphate serves as cofactor. Zn(2+) is required as a cofactor.

It carries out the reaction L-lysine = (3S)-3,6-diaminohexanoate. It participates in amino-acid degradation; L-lysine degradation via acetate pathway. In terms of biological role, catalyzes the interconversion of L-alpha-lysine and L-beta-lysine. This Acetoanaerobium sticklandii (strain ATCC 12662 / DSM 519 / JCM 1433 / CCUG 9281 / NCIMB 10654 / HF) (Clostridium sticklandii) protein is L-lysine 2,3-aminomutase (kamA).